We begin with the raw amino-acid sequence, 382 residues long: uncharacterized protein (382 aa).

12 helical membrane passes run 8–28, 45–65, 75–95, 102–122, 131–151, 157–177, 204–224, 231–251, 270–290, 291–311, 325–345, and 349–369; these read VMLLLCGLLLLTLAIAVLNTL, MVSSSYFTGNLVGTLFTGYLI, YLASLIFAAGCVGLGVMVGFW, FIAGIGCAMIWVVVESALMCS, LLAAYMMAYYMGTFLGQLLVS, LLHVLPWVTGMILAGILPLLF, LGVNGCIISGIVLGSLYGLMP, GMANASIGFWMAVLVSAGILG, VQVFVVILGSIAMLTQAAMAP, ALFILGAAGFTLYPVAMAWAC, ALLLSYTVGSLLGPSFAAMLM, and SDNLLFIMIASVSFIYLLMLL.

Belongs to the major facilitator superfamily. YcaD (TC 2.A.1.26) family.

Its subcellular location is the cell inner membrane. This is an uncharacterized protein from Salmonella enteritidis PT4 (strain P125109).